A 457-amino-acid polypeptide reads, in one-letter code: Acetate--CoA ligase [ADP-forming] II subunit alpha (457 aa).

This sequence belongs to the acetate CoA ligase alpha subunit family. Heterotetramer of two alpha and two beta subunits.

The enzyme catalyses acetate + ATP + CoA = acetyl-CoA + ADP + phosphate. Catalyzes the reversible formation of acetate and ATP from acetyl-CoA by using ADP and phosphate. Can use other substrates such as phenylacetyl-CoA, indoleacetyl-CoA and isobutyryl-CoA, but not succinyl-CoA. Seems to be involved primarily in the degradation of aryl-CoA esters to the corresponding acids. Participates in the conversion of acetyl-CoA to acetate and in the degradation of branched-chain amino acids via branched-chain-acyl-CoA esters. The chain is Acetate--CoA ligase [ADP-forming] II subunit alpha from Pyrococcus furiosus (strain ATCC 43587 / DSM 3638 / JCM 8422 / Vc1).